The sequence spans 282 residues: NADPH-dependent 7-cyano-7-deazaguanine reductase (282 aa).

88-90 (IES) provides a ligand contact to substrate. 90–91 (SK) contacts NADPH. Residue cysteine 190 is the Thioimide intermediate of the active site. Aspartate 197 acts as the Proton donor in catalysis. 229–230 (HE) provides a ligand contact to substrate. 258–259 (RG) is an NADPH binding site.

The protein belongs to the GTP cyclohydrolase I family. QueF type 2 subfamily. As to quaternary structure, homodimer.

It is found in the cytoplasm. The enzyme catalyses 7-aminomethyl-7-carbaguanine + 2 NADP(+) = 7-cyano-7-deazaguanine + 2 NADPH + 3 H(+). The protein operates within tRNA modification; tRNA-queuosine biosynthesis. Its function is as follows. Catalyzes the NADPH-dependent reduction of 7-cyano-7-deazaguanine (preQ0) to 7-aminomethyl-7-deazaguanine (preQ1). This Escherichia coli O157:H7 protein is NADPH-dependent 7-cyano-7-deazaguanine reductase.